The chain runs to 428 residues: Dihydroorotase (428 aa).

The Zn(2+) site is built by His-59 and His-61. Residues 61–63 (HLR) and Asn-93 each bind substrate. Zn(2+) contacts are provided by Asp-151, His-178, and His-231. Position 277 (Asn-277) interacts with substrate. Asp-304 lines the Zn(2+) pocket. Asp-304 is a catalytic residue. Residues His-308 and 322–323 (FG) contribute to the substrate site.

Belongs to the metallo-dependent hydrolases superfamily. DHOase family. Class I DHOase subfamily. Zn(2+) serves as cofactor.

The catalysed reaction is (S)-dihydroorotate + H2O = N-carbamoyl-L-aspartate + H(+). The protein operates within pyrimidine metabolism; UMP biosynthesis via de novo pathway; (S)-dihydroorotate from bicarbonate: step 3/3. Its function is as follows. Catalyzes the reversible cyclization of carbamoyl aspartate to dihydroorotate. The polypeptide is Dihydroorotase (Bacillus cereus (strain G9842)).